The primary structure comprises 212 residues: Guanylate kinase (212 aa).

Positions 14-192 (GTALVICAPS…AYDELRATYL (179 aa)) constitute a Guanylate kinase-like domain. Position 21–28 (21–28 (APSGTGKT)) interacts with ATP.

This sequence belongs to the guanylate kinase family.

The protein localises to the cytoplasm. The catalysed reaction is GMP + ATP = GDP + ADP. Its function is as follows. Essential for recycling GMP and indirectly, cGMP. This chain is Guanylate kinase, found in Lawsonia intracellularis (strain PHE/MN1-00).